The primary structure comprises 342 residues: NADH-ubiquinone oxidoreductase chain 2 (342 aa).

9 helical membrane-spanning segments follow: residues 25-45, 58-78, 94-114, 146-166, 174-194, 195-215, 238-258, 274-294, and 316-336; these read TPWL…IPML, IKYF…ILII, MMIM…FWLP, MSSF…MGGL, ILAY…TISE, NTWE…IFMF, FMMM…GFLP, LVLL…RISF, and VVAL…TSNF.

Belongs to the complex I subunit 2 family.

Its subcellular location is the mitochondrion inner membrane. The catalysed reaction is a ubiquinone + NADH + 5 H(+)(in) = a ubiquinol + NAD(+) + 4 H(+)(out). In terms of biological role, core subunit of the mitochondrial membrane respiratory chain NADH dehydrogenase (Complex I) that is believed to belong to the minimal assembly required for catalysis. Complex I functions in the transfer of electrons from NADH to the respiratory chain. The immediate electron acceptor for the enzyme is believed to be ubiquinone. The chain is NADH-ubiquinone oxidoreductase chain 2 (ND2) from Locusta migratoria (Migratory locust).